The sequence spans 617 residues: Vacuolar protein sorting-associated protein 33B (617 aa).

The protein belongs to the STXBP/unc-18/SEC1 family. In terms of assembly, probable core component of the class C core vacuole/endosome tethering (CORVET) complex. The common core is composed of the class C Vps proteins vps-11, vps-16 and vps-18, and which further associates with vps-8 and vps-33.2. Interacts with spe-39. In terms of tissue distribution, broadly expressed in somatic tissues including the pharynx, intestine, spermatheca, and in coelomocytes. Expressed in the lining of the gut lumen.

It localises to the early endosome. Its subcellular location is the late endosome membrane. It is found in the lysosome membrane. The protein localises to the cytoplasmic vesicle. The protein resides in the clathrin-coated vesicle. It localises to the recycling endosome. Its function is as follows. Plays a role in vesicle-mediated protein trafficking to lysosomal compartments and in membrane docking/fusion reactions of late endosomes/lysosomes. Believed to act as a component of the putative CORVET endosomal tethering complex which is proposed to be involved in the rab-5-to-rab-7 endosome conversion probably implicating sand-1, and via binding SNAREs and SNARE complexes to mediate tethering and docking events during SNARE-mediated membrane fusion. The CORVET complex is proposed to function as a rab-5 effector to mediate early endosome fusion probably in specific endosome subpopulations. Most likely within the CORVET complex, it is involved in the fusion of endocytic compartments. Required for sperm development and function. The chain is Vacuolar protein sorting-associated protein 33B from Caenorhabditis elegans.